The primary structure comprises 906 residues: Protein translocase subunit SecA (906 aa).

ATP contacts are provided by residues Q86, 104-108 (GEGKT), and D499. Positions 834–847 (KLQKNMRESREDPA) are enriched in basic and acidic residues. The tract at residues 834-887 (KLQKNMRESREDPAFSKYNAGSSLETDLKPVVSRVDPKDRNPDDPTSWGRVSRN) is disordered. 4 residues coordinate Zn(2+): C890, C892, C901, and H902.

It belongs to the SecA family. As to quaternary structure, monomer and homodimer. Part of the essential Sec protein translocation apparatus which comprises SecA, SecYEG and auxiliary proteins SecDF-YajC and YidC. The cofactor is Zn(2+).

The protein resides in the cell inner membrane. It is found in the cytoplasm. It catalyses the reaction ATP + H2O + cellular proteinSide 1 = ADP + phosphate + cellular proteinSide 2.. In terms of biological role, part of the Sec protein translocase complex. Interacts with the SecYEG preprotein conducting channel. Has a central role in coupling the hydrolysis of ATP to the transfer of proteins into and across the cell membrane, serving both as a receptor for the preprotein-SecB complex and as an ATP-driven molecular motor driving the stepwise translocation of polypeptide chains across the membrane. This is Protein translocase subunit SecA from Rickettsia felis (strain ATCC VR-1525 / URRWXCal2) (Rickettsia azadi).